A 739-amino-acid chain; its full sequence is Sulfate transporter (739 aa).

Composition is skewed to basic and acidic residues over residues 1-17 and 31-46; these read MSSE…RDLP and TQRR…ETGH. Positions 1–47 are disordered; the sequence is MSSENKEQHDLSPRDLPEEAFGFPSELPLETQRRSGTDLRQSETGHG. The residue at position 12 (S12) is a Phosphoserine. 2 consecutive transmembrane segments (helical) span residues 112 to 132 and 137 to 157; these read VMSG…YSLL and PIYG…FGTS. A glycan (N-linked (GlcNAc...) asparagine) is linked at N205. 2 helical membrane passes run 227-247 and 255-275; these read FMAG…VSVY and GFVT…LLGL. A glycan (N-linked (GlcNAc...) asparagine) is linked at N357. 4 consecutive transmembrane segments (helical) span residues 378–398, 420–440, 455–475, and 524–544; these read LIPN…AITV, AIGF…SAAL, LSAI…APLF, and LLST…CVIL. In terms of domain architecture, STAS spans 568-719; it reads TYKNLRSKSG…YSLSEAVAFA (152 aa).

The protein belongs to the SLC26A/SulP transporter (TC 2.A.53) family. Post-translationally, N-glycosylated. As to expression, distributed mainly in the thymus, testis and osteoblastic cells. Highly expressed in the bone, cartilage, kidney and colon.

The protein resides in the cell membrane. Its subcellular location is the apical cell membrane. It catalyses the reaction oxalate(in) + sulfate(out) = oxalate(out) + sulfate(in). It carries out the reaction sulfate(out) + 2 chloride(in) = sulfate(in) + 2 chloride(out). The catalysed reaction is oxalate(out) + 2 chloride(in) = oxalate(in) + 2 chloride(out). The enzyme catalyses bromide(in) + chloride(out) = bromide(out) + chloride(in). It catalyses the reaction nitrate(in) + chloride(out) = nitrate(out) + chloride(in). It carries out the reaction iodide(in) + chloride(out) = iodide(out) + chloride(in). Functionally, sulfate transporter which mediates sulfate uptake into chondrocytes in order to maintain adequate sulfation of proteoglycans which is needed for cartilage development. Mediates electroneutral anion exchange of sulfate ions for oxalate ions, sulfate and oxalate ions for chloride and/or hydroxyl ions and chloride ions for bromide, iodide and nitrate ions. The coupling of sulfate transport to both hydroxyl and chloride ions likely serves to ensure transport at both acidic pH when most sulfate uptake is mediated by sulfate-hydroxide exchange and alkaline pH when most sulfate uptake is mediated by sulfate-chloride exchange. Essential for chondrocyte proliferation, differentiation and cell size expansion. The chain is Sulfate transporter (Slc26a2) from Mus musculus (Mouse).